Here is a 668-residue protein sequence, read N- to C-terminus: Major S-layer protein (668 aa).

Residues 1–24 form the signal peptide; it reads MKRFAAVTLAALMLLTVFASAASA. N-linked (GlcNAc...) asparagine glycans are attached at residues Asn-36, Asn-65, Asn-111, Asn-265, Asn-583, Asn-596, Asn-602, Asn-608, Asn-617, and Asn-635. The interval 584 to 650 is disordered; sequence ETTSITKPDE…ESNGSPGFGV (67 aa). Over residues 596–611 the composition is skewed to polar residues; the sequence is NETVSDNETMPDNTSS. Positions 631-641 are enriched in acidic residues; that stretch reads EPTDNETEPDE. The chain crosses the membrane as a helical span at residues 644–664; that stretch reads GSPGFGVVLGLAGLLGVVYLV.

This sequence belongs to the Methanosarcinales S-layer protein family. Post-translationally, glycosylated.

The protein resides in the secreted. Its subcellular location is the cell wall. It is found in the S-layer. The protein localises to the cell membrane. Its function is as follows. S-layer protein. The S-layer is a paracrystalline mono-layered assembly of proteins which coat the surface of the cell. This Methanosarcina barkeri (strain Fusaro / DSM 804) protein is Major S-layer protein.